Consider the following 83-residue polypeptide: Protein CASPARIAN STRIP INTEGRITY FACTOR 1 (83 aa).

The first 22 residues, 1–22 (MGMSPLTVKKLGFIFMIVSASA), serve as a signal peptide directing secretion. Positions 59-83 (MNTKDYGNNSPSPRLERPPFKLIPN) are disordered. A Sulfotyrosine modification is found at Tyr64. Residues Pro69 and Pro71 each carry the hydroxyproline modification.

As to quaternary structure, interacts with the specific receptor kinases GSO1 and GSO2. In terms of tissue distribution, expressed exclusively in the root stele.

Its function is as follows. Peptide hormone required for contiguous Casparian strip diffusion barrier formation in roots via the regulation of CASPs protein expression and distribution in a GSO1-GSO2 signaling pathway. The Casparian strip is required for ion homeostasis (e.g. iron and potassium ions). In Arabidopsis thaliana (Mouse-ear cress), this protein is Protein CASPARIAN STRIP INTEGRITY FACTOR 1.